A 74-amino-acid chain; its full sequence is Delta-actitoxin-Amc3a (74 aa).

A signal peptide spans 1-19; it reads MNRLIILVVAAVFLGMASA. Residues 20–24 constitute a propeptide that is removed on maturation; sequence EEDVL. A Hydroxyproline modification is found at Pro29. Disulfide bonds link Cys30–Cys70, Cys32–Cys60, and Cys53–Cys71. Position 73 is a glutamine amide (Gln73).

This sequence belongs to the sea anemone sodium channel inhibitory toxin family. Type I subfamily.

The protein resides in the secreted. Its subcellular location is the nematocyst. Functionally, inhibits voltage-gated sodium channels (Nav). In Antheopsis maculata (Sea anemone), this protein is Delta-actitoxin-Amc3a.